The sequence spans 318 residues: uncharacterized protein (318 aa).

This is an uncharacterized protein from Orgyia pseudotsugata multicapsid polyhedrosis virus (OpMNPV).